Reading from the N-terminus, the 156-residue chain is MAAGSITTLPALSGDGGGGGAFPPGHFKDPKRLYCKNGGFFLRIHPDGRVDGIREKSDPNIKLQLQAEERGVVSIKGVCANRYLAMKEDGRLLALKYVTEECFFFERLESNNYNTYRSRKYSNWYVALKRTGQYKLGSKTGPGQKAILFLPMSAKS.

Positions 1-9 are excised as a propeptide; that stretch reads MAAGSITTL. A heparin-binding site is contributed by Asn37. Tyr83 bears the Phosphotyrosine; by TEC mark. Lys96 is covalently cross-linked (Glycyl lysine isopeptide (Lys-Gly) (interchain with G-Cter in SUMO1)). Residues 129–145 form a heparin-binding region; it reads KRTGQYKLGSKTGPGQK.

This sequence belongs to the heparin-binding growth factors family. As to quaternary structure, monomer. Homodimer. Interacts with FGFR1, FGFR2, FGFR3 and FGFR4. Affinity between fibroblast growth factors (FGFs) and their receptors is increased by heparan sulfate glycosaminoglycans that function as coreceptors. Interacts with CSPG4, FGFBP1 and TEC. Found in a complex with FGFBP1, FGF1 and FGF2. Interacts with FGFBP3. Interacts with integrin ITGAV:ITGB3; the interaction is required for FGF2 signaling. Interacts with SNORC (via the extracellular domain). Interacts with glypican GPC3. Post-translationally, phosphorylation at Tyr-83 regulates FGF2 unconventional secretion.

It is found in the secreted. The protein localises to the nucleus. Its function is as follows. Acts as a ligand for FGFR1, FGFR2, FGFR3 and FGFR4. Also acts as an integrin ligand which is required for FGF2 signaling. Binds to integrin ITGAV:ITGB3. Plays an important role in the regulation of cell survival, cell division, cell differentiation and cell migration. Functions as a potent mitogen in vitro. Can induce angiogenesis. Mediates phosphorylation of ERK1/2 and thereby promotes retinal lens fiber differentiation. This chain is Fibroblast growth factor 2 (FGF2), found in Monodelphis domestica (Gray short-tailed opossum).